We begin with the raw amino-acid sequence, 635 residues long: MTNSNLRTENHFDYVKIKLASPERVMEWGQRTLPNGQVVGEVTKPETINYRTLKPEMDGLFCEKIFGPSKDWECHCGKYKRVRHRGIVCERCGVEVTESRVRRHRMGFIKLAAPVSHVWYLKGIPSYVAILLDMPLRDVEQIVYFNCYVVLDIGDSKDLKYKQLLTEDEWLEIEDEIYAEDSTIENEPIVGIGAEALKQLLEDLNLKEVAEQLREDIATSKGQKRAKLIKRLRVIDNFIATSASPEWMVLDAIPVIPPDLRPMVQLDGGRFATSDLNDLYRRVINRNNRLARLQEILAPEIIVRNEKRMLQEAVDALIDNGRRGRTVVGANNRPLKSLSDIIEGKQGRFRQNLLGKRVDYSGRSVIVVGPKLKMHQCGLPKEMAIELFQPFVIHRLIRQNIVNNIKAAKKLIQKADDEVMQVLQEVIEGHPILLNRAPTLHRLGIQAFEPKLVAGRAIQLHPLVCPAFNADFDGDQMAVHVPLAIEAQTEARMLMLASNNILSPATGDPIVTPSQDMVLGSYYLTAIQPQSKQPKFGDYSNTYASLEDVLQALEDKRIDLHDWVWVRFSGEIEDDDELQNPLKSETLKDGTRIEEWTYRRDRLDEDGSLISRYILTTVGRVVMNHTIIDAVAATS.

Residues Cys74, Cys76, Cys89, and Cys92 each coordinate Zn(2+). Positions 471, 473, and 475 each coordinate Mg(2+).

This sequence belongs to the RNA polymerase beta' chain family. RpoC1 subfamily. In cyanobacteria the RNAP catalytic core is composed of 2 alpha, 1 beta, 1 beta', 1 gamma and 1 omega subunit. When a sigma factor is associated with the core the holoenzyme is formed, which can initiate transcription. It depends on Mg(2+) as a cofactor. Zn(2+) is required as a cofactor.

The enzyme catalyses RNA(n) + a ribonucleoside 5'-triphosphate = RNA(n+1) + diphosphate. In terms of biological role, DNA-dependent RNA polymerase catalyzes the transcription of DNA into RNA using the four ribonucleoside triphosphates as substrates. The sequence is that of DNA-directed RNA polymerase subunit gamma from Prochlorococcus marinus (strain NATL2A).